We begin with the raw amino-acid sequence, 441 residues long: Arginine biosynthesis bifunctional protein ArgJ, mitochondrial (441 aa).

6 residues coordinate substrate: T177, K204, T215, E301, N436, and S441. T215 functions as the Nucleophile in the catalytic mechanism.

The protein belongs to the ArgJ family. Heterodimer of an alpha and a beta chain. The alpha and beta chains are autoproteolytically processed from a single precursor protein within the mitochondrion.

Its subcellular location is the mitochondrion matrix. It catalyses the reaction N(2)-acetyl-L-ornithine + L-glutamate = N-acetyl-L-glutamate + L-ornithine. It carries out the reaction L-glutamate + acetyl-CoA = N-acetyl-L-glutamate + CoA + H(+). The protein operates within amino-acid biosynthesis; L-arginine biosynthesis; L-ornithine and N-acetyl-L-glutamate from L-glutamate and N(2)-acetyl-L-ornithine (cyclic): step 1/1. Its pathway is amino-acid biosynthesis; L-arginine biosynthesis; N(2)-acetyl-L-ornithine from L-glutamate: step 1/4. Its function is as follows. Catalyzes two activities which are involved in the cyclic version of arginine biosynthesis: the synthesis of acetylglutamate from glutamate and acetyl-CoA, and of ornithine by transacetylation between acetylornithine and glutamate. This chain is Arginine biosynthesis bifunctional protein ArgJ, mitochondrial, found in Candida glabrata (strain ATCC 2001 / BCRC 20586 / JCM 3761 / NBRC 0622 / NRRL Y-65 / CBS 138) (Yeast).